Consider the following 203-residue polypeptide: Ribosomal RNA small subunit methyltransferase G (203 aa).

S-adenosyl-L-methionine contacts are provided by residues G73, L78, 124–125 (VE), and R138.

It belongs to the methyltransferase superfamily. RNA methyltransferase RsmG family.

It is found in the cytoplasm. The catalysed reaction is guanosine(527) in 16S rRNA + S-adenosyl-L-methionine = N(7)-methylguanosine(527) in 16S rRNA + S-adenosyl-L-homocysteine. In terms of biological role, specifically methylates the N7 position of guanine in position 527 of 16S rRNA. The polypeptide is Ribosomal RNA small subunit methyltransferase G (Haemophilus ducreyi (strain 35000HP / ATCC 700724)).